A 1006-amino-acid chain; its full sequence is Probable beta-galactosidase A (1006 aa).

A signal peptide spans 1-18; the sequence is MKLLSVCAVALLAAQAAG. Residues Tyr96, Asn140, Ala141, and Glu142 each coordinate substrate. Asn156 is a glycosylation site (N-linked (GlcNAc...) asparagine). Asn199 is a substrate binding site. The active-site Proton donor is the Glu200. An intrachain disulfide couples Cys205 to Cys206. An N-linked (GlcNAc...) asparagine glycan is attached at Asn207. Tyr260 serves as a coordination point for substrate. A disulfide bridge links Cys266 with Cys315. Glu298 serves as the catalytic Nucleophile. Tyr364 is a binding site for substrate. N-linked (GlcNAc...) asparagine glycosylation is found at Asn373, Asn402, Asn422, Asn622, Asn777, and Asn914.

Belongs to the glycosyl hydrolase 35 family.

It is found in the secreted. The enzyme catalyses Hydrolysis of terminal non-reducing beta-D-galactose residues in beta-D-galactosides.. Cleaves beta-linked terminal galactosyl residues from gangliosides, glycoproteins, and glycosaminoglycans. The polypeptide is Probable beta-galactosidase A (lacA) (Neosartorya fischeri (strain ATCC 1020 / DSM 3700 / CBS 544.65 / FGSC A1164 / JCM 1740 / NRRL 181 / WB 181) (Aspergillus fischerianus)).